Consider the following 579-residue polypeptide: Thiol:disulfide interchange protein DsbD (579 aa).

The first 16 residues, 1-16 (MKKLFLFFTLIFTAFA), serve as a signal peptide directing secretion. Cystine bridges form between Cys-124–Cys-129 and Cys-193–Cys-315. A run of 8 helical transmembrane segments spans residues 178–198 (IFGFFVLGLGLAFTPCVLPML), 230–250 (LTYTLLGLAVAAIGLPFQIAL), 254–274 (YVMIGLSILFVVLALSMFGLF), 296–316 (GAFGGAFAMGMIAGLVASPCT), 337–357 (AVTLYLLALGMGVPLMLITLF), 376–396 (FGFVMLALPVFLLSRILPEVW), 397–417 (ESRLWAGLATVFFIWFALQMS), and 420–440 (GFGYAIKIISFALAMVTVQPL). The 131-residue stretch at 449 to 579 (TTTQSAVENM…AFSNWIEKLL (131 aa)) folds into the Thioredoxin domain. Cysteines 495 and 498 form a disulfide.

It belongs to the thioredoxin family. DsbD subfamily.

The protein resides in the cell inner membrane. The catalysed reaction is [protein]-dithiol + NAD(+) = [protein]-disulfide + NADH + H(+). It carries out the reaction [protein]-dithiol + NADP(+) = [protein]-disulfide + NADPH + H(+). Required to facilitate the formation of correct disulfide bonds in some periplasmic proteins and for the assembly of the periplasmic c-type cytochromes. Acts by transferring electrons from cytoplasmic thioredoxin to the periplasm. This transfer involves a cascade of disulfide bond formation and reduction steps. The chain is Thiol:disulfide interchange protein DsbD from Haemophilus influenzae (strain PittGG).